A 338-amino-acid chain; its full sequence is tRNA N6-adenosine threonylcarbamoyltransferase (338 aa).

2 residues coordinate Fe cation: H111 and H115. Residues 133 to 137 (LVSGG), D166, G179, D183, and N275 each bind substrate. D300 contributes to the Fe cation binding site.

The protein belongs to the KAE1 / TsaD family. It depends on Fe(2+) as a cofactor.

Its subcellular location is the cytoplasm. The enzyme catalyses L-threonylcarbamoyladenylate + adenosine(37) in tRNA = N(6)-L-threonylcarbamoyladenosine(37) in tRNA + AMP + H(+). Functionally, required for the formation of a threonylcarbamoyl group on adenosine at position 37 (t(6)A37) in tRNAs that read codons beginning with adenine. Is involved in the transfer of the threonylcarbamoyl moiety of threonylcarbamoyl-AMP (TC-AMP) to the N6 group of A37, together with TsaE and TsaB. TsaD likely plays a direct catalytic role in this reaction. This Treponema denticola (strain ATCC 35405 / DSM 14222 / CIP 103919 / JCM 8153 / KCTC 15104) protein is tRNA N6-adenosine threonylcarbamoyltransferase.